We begin with the raw amino-acid sequence, 244 residues long: Lipid A 1-phosphatase (244 aa).

Transmembrane regions (helical) follow at residues 28–48 (LFVT…PIGA), 60–80 (ELLT…LLFF), 98–118 (ALYV…SGLL), 154–174 (FPSG…LLFP), 178–198 (VAFI…GAHY), and 201–221 (DVIA…IVFA).

The protein belongs to the lipid A LpxE 1-phosphatase family.

It localises to the cell inner membrane. Its pathway is bacterial outer membrane biogenesis; LPS lipid A biosynthesis. Its function is as follows. Removes the 1-phosphate group from (tetraacyl) lipid A species, has no requirement for the Kdo(2) moiety of lipid A. Has no 4'-phosphatase activity. Reduces sensitivity of S.meliloti strain 1021 to the cationic antimicrobial peptide (CAMP) polymyxin B. The sequence is that of Lipid A 1-phosphatase from Rhizobium johnstonii (strain DSM 114642 / LMG 32736 / 3841) (Rhizobium leguminosarum bv. viciae).